A 79-amino-acid chain; its full sequence is Small ribosomal subunit protein uS17 (79 aa).

Belongs to the universal ribosomal protein uS17 family. As to quaternary structure, part of the 30S ribosomal subunit.

One of the primary rRNA binding proteins, it binds specifically to the 5'-end of 16S ribosomal RNA. The sequence is that of Small ribosomal subunit protein uS17 from Rhizobium etli (strain ATCC 51251 / DSM 11541 / JCM 21823 / NBRC 15573 / CFN 42).